Here is a 215-residue protein sequence, read N- to C-terminus: UPF0502 protein YceH (215 aa).

The protein belongs to the UPF0502 family.

The protein is UPF0502 protein YceH of Salmonella paratyphi B (strain ATCC BAA-1250 / SPB7).